Reading from the N-terminus, the 815-residue chain is Leucine--tRNA ligase (815 aa).

A 'HIGH' region motif is present at residues 42-52 (PYPSGRLHMGH). Residues 571–575 (KMSKS) carry the 'KMSKS' region motif. K574 contacts ATP.

The protein belongs to the class-I aminoacyl-tRNA synthetase family.

It is found in the cytoplasm. It carries out the reaction tRNA(Leu) + L-leucine + ATP = L-leucyl-tRNA(Leu) + AMP + diphosphate. The chain is Leucine--tRNA ligase from Vesicomyosocius okutanii subsp. Calyptogena okutanii (strain HA).